The sequence spans 502 residues: Glycerol kinase (502 aa).

Residue Thr15 participates in ADP binding. Residues Thr15, Thr16, and Ser17 each coordinate ATP. Position 15 (Thr15) interacts with sn-glycerol 3-phosphate. Arg19 contacts ADP. 3 residues coordinate sn-glycerol 3-phosphate: Arg85, Glu86, and Tyr137. Residues Arg85, Glu86, and Tyr137 each coordinate glycerol. Residue His233 is modified to Phosphohistidine; by HPr. Position 247 (Asp247) interacts with sn-glycerol 3-phosphate. The glycerol site is built by Asp247 and Gln248. ADP is bound by residues Thr269 and Gly312. ATP is bound by residues Thr269, Gly312, Gln316, and Gly413. Gly413 and Asn417 together coordinate ADP.

It belongs to the FGGY kinase family. Homotetramer and homodimer (in equilibrium). In terms of processing, the phosphoenolpyruvate-dependent sugar phosphotransferase system (PTS), including enzyme I, and histidine-containing protein (HPr) are required for the phosphorylation, which leads to the activation of the enzyme.

The enzyme catalyses glycerol + ATP = sn-glycerol 3-phosphate + ADP + H(+). It participates in polyol metabolism; glycerol degradation via glycerol kinase pathway; sn-glycerol 3-phosphate from glycerol: step 1/1. Its activity is regulated as follows. Activated by phosphorylation and inhibited by fructose 1,6-bisphosphate (FBP). Key enzyme in the regulation of glycerol uptake and metabolism. Catalyzes the phosphorylation of glycerol to yield sn-glycerol 3-phosphate. This Streptococcus agalactiae serotype Ia (strain ATCC 27591 / A909 / CDC SS700) protein is Glycerol kinase.